The chain runs to 31 residues: Cytochrome b6-f complex subunit 6 (31 aa).

The chain crosses the membrane as a helical span at residues Thr-3–Ile-23.

The protein belongs to the PetL family. The 4 large subunits of the cytochrome b6-f complex are cytochrome b6, subunit IV (17 kDa polypeptide, PetD), cytochrome f and the Rieske protein, while the 4 small subunits are PetG, PetL, PetM and PetN. The complex functions as a dimer.

The protein localises to the plastid. It localises to the chloroplast thylakoid membrane. Functionally, component of the cytochrome b6-f complex, which mediates electron transfer between photosystem II (PSII) and photosystem I (PSI), cyclic electron flow around PSI, and state transitions. PetL is important for photoautotrophic growth as well as for electron transfer efficiency and stability of the cytochrome b6-f complex. The sequence is that of Cytochrome b6-f complex subunit 6 from Zea mays (Maize).